The following is a 1181-amino-acid chain: MSLLNPVLLPPNVKAYLSQGERFIKWDDETSIASPVILRVDPKGYYLYWTYQNQEMEFLDVTSIRDTRFGKFAKIPKSQKLREVFNMDFPDNHFLLKTLTVVSGPDMVDLTFYNFVSYKENVGKDWAEDVLALAKHPMTVNAPRSTFLDKILVKLKMQLNPEGKIPVKNFFQMFPADRKRVEAALGACHLAKGKNDAINPEDFPESVYKSFLMSLCPRPEIDEIFTSYHSKAKPYMTKEHLTKFINQKQRDPRLNSLLFPPARPEQVQVLIDKYEPSGINVQRGQLSPEGMVWFLCGPENSVLAHDTLLIHQDMTQPLNHYFINSSHNTYLTAGQFSGLSSAEMYRQVLLSGCRCVELDCWKGKPPDEEPIITHGFTMTTDILFKEAIEAIAESAFKTSPYPVILSFENHVDSPRQQAKMAEYCRSMFGETLLTDPLENFPLKPGIPLPSPEDLRGKILIKNKKNQFSGPASPSKKPGGVAEGSLPSSVPVEEDTGWTAEDRTEVEEEEVVEEEEEEESGNLDEEEIKKMQSDEGTAGLEVTAYEEMSSLVNYIQPTKFISFEFSAQKNRSYVVSSFTELKAYELLSKASMQFVDYNKRQMSRVYPKGTRMDSSNYMPQMFWNAGCQMVALNFQTMDLPMQQNMALFEFNGQSGYLLKHEFMRRLDKQFNPFSVDRIDVVVATTLSITIISGQFLSERSVRTYVEVELFGLPGDPKRRYRTKLSPTANSINPVWKEEPFIFEKILMPELASLRIAVMEEGSKFLGHRIIPINALHSGYHHLCLRSESNMALTMPALFVFLEMKDYIPDTWADLTVALANPIKYFNAQDKKSVKLKGVTGSLPEKLFSGTPVASQSNGAPVSAGNGSTAPGTKATGEEATKEVTEPQTASLEELRELKGVVKLQRRHEKELRELERRGARRWEELLQRGAAQLAELQTQAAGCKLRPGKGSRKKRTLPCEETVVAPSEPHDRADPRVQELKDRLEQELQQQGEEQYRSVLKRKEQHVTEQIAKMMELAREKQAAELKTFKETSETDTKEMKKKLEAKRLERIQAMTKVTTDKVAQERLKREINNSHIQEVVQAVKQMTETLERHQEKLEERQTACLEQIQAMEKQFQEKALAEYEAKMKGLEAEVKESVRAYFKDCFPTEAEDKPERSCEASEESCPQEPLVSKADTQESRL.

The PI-PLC X-box domain maps to 312 to 463 (QDMTQPLNHY…LRGKILIKNK (152 aa)). Histidine 327 is an active-site residue. Asparagine 328, glutamate 357, and aspartate 359 together coordinate Ca(2+). Histidine 374 is a catalytic residue. Glutamate 408 is a binding site for Ca(2+). The disordered stretch occupies residues 465 to 534 (NQFSGPASPS…EEIKKMQSDE (70 aa)). Acidic residues predominate over residues 503–525 (TEVEEEEVVEEEEEEESGNLDEE). Residues 547 to 663 (MSSLVNYIQP…GYLLKHEFMR (117 aa)) form the PI-PLC Y-box domain. The region spanning 666–791 (DKQFNPFSVD…CLRSESNMAL (126 aa)) is the C2 domain. Residues 847 to 890 (SGTPVASQSNGAPVSAGNGSTAPGTKATGEEATKEVTEPQTASL) form a disordered region. The segment covering 850 to 869 (PVASQSNGAPVSAGNGSTAP) has biased composition (polar residues). Basic and acidic residues predominate over residues 874 to 883 (TGEEATKEVT). Residues 893–940 (LRELKGVVKLQRRHEKELRELERRGARRWEELLQRGAAQLAELQTQAA) are a coiled coil. Serine 950 is modified (phosphoserine). Coiled coils occupy residues 974–1026 (PRVQ…AELK) and 1075–1141 (HIQE…VRAY). A disordered region spans residues 1149-1181 (EAEDKPERSCEASEESCPQEPLVSKADTQESRL). Residues 1150 to 1159 (AEDKPERSCE) show a composition bias toward basic and acidic residues.

Interacts with RAC1. Forms a complex composed of at least WDR26, a G-beta:gamma unit, and PLCB2. It depends on Ca(2+) as a cofactor.

The catalysed reaction is a 1,2-diacyl-sn-glycero-3-phospho-(1D-myo-inositol-4,5-bisphosphate) + H2O = 1D-myo-inositol 1,4,5-trisphosphate + a 1,2-diacyl-sn-glycerol + H(+). It catalyses the reaction a 1,2-diacyl-sn-glycero-3-phospho-(1D-myo-inositol) + H2O = 1D-myo-inositol 1-phosphate + a 1,2-diacyl-sn-glycerol + H(+). Functionally, the production of the second messenger molecules diacylglycerol (DAG) and inositol 1,4,5-trisphosphate (IP3) is mediated by activated phosphatidylinositol-specific phospholipase C enzymes. In neutrophils, participates in a phospholipase C-activating N-formyl peptide-activated GPCR (G protein-coupled receptor) signaling pathway by promoting RASGRP4 activation by DAG, to promote neutrophil functional responses. The sequence is that of 1-phosphatidylinositol 4,5-bisphosphate phosphodiesterase beta-2 from Mus musculus (Mouse).